The following is a 658-amino-acid chain: UvrABC system protein B (658 aa).

The 389-residue stretch at Asp-26–Pro-414 folds into the Helicase ATP-binding domain. An ATP-binding site is contributed by Gly-39 to Thr-46. The Beta-hairpin motif lies at Tyr-92–Ile-115. Positions Gln-430–Ile-596 constitute a Helicase C-terminal domain. Positions Glu-622–Glu-657 constitute a UVR domain.

Belongs to the UvrB family. In terms of assembly, forms a heterotetramer with UvrA during the search for lesions. Interacts with UvrC in an incision complex.

Its subcellular location is the cytoplasm. Its function is as follows. The UvrABC repair system catalyzes the recognition and processing of DNA lesions. A damage recognition complex composed of 2 UvrA and 2 UvrB subunits scans DNA for abnormalities. Upon binding of the UvrA(2)B(2) complex to a putative damaged site, the DNA wraps around one UvrB monomer. DNA wrap is dependent on ATP binding by UvrB and probably causes local melting of the DNA helix, facilitating insertion of UvrB beta-hairpin between the DNA strands. Then UvrB probes one DNA strand for the presence of a lesion. If a lesion is found the UvrA subunits dissociate and the UvrB-DNA preincision complex is formed. This complex is subsequently bound by UvrC and the second UvrB is released. If no lesion is found, the DNA wraps around the other UvrB subunit that will check the other stand for damage. This chain is UvrABC system protein B, found in Geobacillus kaustophilus (strain HTA426).